We begin with the raw amino-acid sequence, 236 residues long: Dense granule protein 7 (236 aa).

An N-terminal signal peptide occupies residues 1–26 (MARHAIFSALCVLGLVAAALPQFATA). The segment at 45-106 (DGQAPVDSLR…EVHFRKRGVR (62 aa)) is disordered. Residues 70-80 (TTSMDKASVES) are compositionally biased toward polar residues. The interval 147–236 (AVGMGASYFA…SGEDGEDARQ (90 aa)) is required for dimerization, interactions with liposomes and liposome tubulation. The chain crosses the membrane as a helical span at residues 181-201 (VGTVLGFAALAAAAAFLGMGL). A disordered region spans residues 208-236 (FSPRKNRSRQPALEQEVPESGEDGEDARQ). An N-linked (GlcNAc...) asparagine glycan is attached at Asn-213. Residues 223–236 (EVPESGEDGEDARQ) show a composition bias toward acidic residues.

The protein belongs to the Gra7 family. As to quaternary structure, homodimer. Can form higher order homooligomers in a lipid-stimulated manner. Component of a complex at least composed of ROP18, GRA7 and ROP2. Interacts with ROP5. Interacts with ROP18 in the absence of ROP5. Interacts with mouse IRGA6/IIGP1 in GTP-dependent manner; the interaction results in faster turnover of the GTP-activated IRGA6/IIGP1 oligomer. Interacts with mouse TRAF6 (via N-terminal RING domain); the interaction plays a role in GRA7-induced pro-inflammatory cytokine production in mouse macrophages.

The protein localises to the secreted. It is found in the parasitophorous vacuole lumen. It localises to the parasitophorous vacuole membrane. Its subcellular location is the cytoplasm. The protein resides in the host cytoplasm. The protein localises to the cytoplasmic vesicle. It is found in the secretory vesicle. Its function is as follows. Binds lipid bilayers, sequesters host endocytic organelles in the parasitophorous vacuole space, and causes their deformation and remodeling. Plays a role in nutrient acquisition from the host. In complex with ROP18, targets immunity-related GTPases (IRGs) to prevent IRG-mediated parasite killing by mouse cells. Important component within a kinase complex, contributing to phosphorylation of mouse IRGA6/IIGP1, an immunity-related GTPase that protects mice from infection by certain intracellular pathogens, by Toxoplasma gondii ROP5 and ROP18. Induces pro-inflammatory cytokine production in host macrophages. Activates host pro-inflammatory signaling pathways in a MyD88-dependent manner. Triggers generation of reactive oxygen species (ROS) in host cells. Activates MAPK pathway in host cells. Activates host NF-kappa-B signaling pathway by interacting with TRAF6 and modulating the 'Lys-63'-linked polyubiquitination of TRAF6. This is Dense granule protein 7 from Toxoplasma gondii.